A 1892-amino-acid chain; its full sequence is Kinesin-like protein KIN-12E (1892 aa).

Positions 1–28 (MAGHGAGGRRASTSRAAARRVEAETNEN) are disordered. The Kinesin motor domain occupies 64 to 401 (NVQVLIRIRP…LKFAQRAKLI (338 aa)). 145 to 152 (GQTGSGKT) provides a ligand contact to ATP. Coiled coils occupy residues 406 to 438 (KVNE…QQNM), 486 to 526 (SLRR…TTVK), 1066 to 1139 (LFSN…LHEQ), 1303 to 1357 (KLLQ…LAEN), and 1396 to 1528 (ISET…SYQI). Residues 1633–1649 (LHESNSDTGHTKFEKPS) show a composition bias toward basic and acidic residues. Residues 1633-1656 (LHESNSDTGHTKFEKPSGRTRGSG) form a disordered region. A coiled-coil region spans residues 1780–1841 (MDQRKADLLE…LVGSNQAIAE (62 aa)). Positions 1870-1892 (HARHEHSRLQAAKSSRTRRGSHQ) are disordered.

Belongs to the TRAFAC class myosin-kinesin ATPase superfamily. Kinesin family. KIN-12 subfamily.

In Oryza sativa subsp. japonica (Rice), this protein is Kinesin-like protein KIN-12E.